Reading from the N-terminus, the 971-residue chain is E3 ubiquitin-protein ligase MIB2 (971 aa).

The region spanning 1 to 80 (MDLDPHAGVQ…AHDLLLYDNA (80 aa)) is the MIB/HERC2 1 domain. Residues 86–138 (HPNIICDCCKKHGLRGMRWKCRVCFDYDLCTQCYMHNKHDLTHAFERYETSHS) form a ZZ-type zinc finger. Positions 91, 94, 106, 109, 115, 118, 124, and 128 each coordinate Zn(2+). Residues 149–227 (LPRIPLRGIF…KVDLKCVGEA (79 aa)) enclose the MIB/HERC2 2 domain. A Phosphoserine modification is found at Ser251. ANK repeat units lie at residues 478 to 507 (QGRT…SVDL), 511 to 540 (EGNT…GVDA), 544 to 573 (TRST…DVNL), 577 to 609 (HADT…DVTA), 613 to 642 (QGFT…QLVD), 647 to 677 (DGFT…DVNV), 681 to 710 (KLQS…NVNT), 714 to 742 (EGDT…DPGP), and 783 to 812 (RGRS…ERQA). RING-type zinc fingers lie at residues 848 to 883 (CLVC…IRCQ) and 927 to 960 (CPIC…PICR).

In terms of assembly, interacts with actin monomer. In terms of processing, ubiquitinated. Possibly via autoubiquitination.

The protein localises to the cytoplasm. The protein resides in the endosome. It carries out the reaction S-ubiquitinyl-[E2 ubiquitin-conjugating enzyme]-L-cysteine + [acceptor protein]-L-lysine = [E2 ubiquitin-conjugating enzyme]-L-cysteine + N(6)-ubiquitinyl-[acceptor protein]-L-lysine.. It functions in the pathway protein modification; protein ubiquitination. In terms of biological role, E3 ubiquitin-protein ligase that mediates ubiquitination of Delta receptors, which act as ligands of Notch proteins. Positively regulates the Delta-mediated Notch signaling by ubiquitinating the intracellular domain of Delta, leading to endocytosis of Delta receptors. The polypeptide is E3 ubiquitin-protein ligase MIB2 (Mib2) (Rattus norvegicus (Rat)).